Reading from the N-terminus, the 274-residue chain is Tryptophan synthase alpha chain (274 aa).

Active-site proton acceptor residues include glutamate 49 and aspartate 60.

This sequence belongs to the TrpA family. Tetramer of two alpha and two beta chains.

It carries out the reaction (1S,2R)-1-C-(indol-3-yl)glycerol 3-phosphate + L-serine = D-glyceraldehyde 3-phosphate + L-tryptophan + H2O. It functions in the pathway amino-acid biosynthesis; L-tryptophan biosynthesis; L-tryptophan from chorismate: step 5/5. Its function is as follows. The alpha subunit is responsible for the aldol cleavage of indoleglycerol phosphate to indole and glyceraldehyde 3-phosphate. This chain is Tryptophan synthase alpha chain, found in Gluconacetobacter diazotrophicus (strain ATCC 49037 / DSM 5601 / CCUG 37298 / CIP 103539 / LMG 7603 / PAl5).